The primary structure comprises 501 residues: Uridine kinase (501 aa).

The residue at position 17 (Ser17) is a Phosphoserine. 63-70 serves as a coordination point for ATP; the sequence is GASGSGKT. A Phosphoserine modification is found at Ser276.

Belongs to the uridine kinase family.

It localises to the cytoplasm. The protein localises to the nucleus. The catalysed reaction is uridine + ATP = UMP + ADP + H(+). It carries out the reaction cytidine + ATP = CMP + ADP + H(+). It functions in the pathway pyrimidine metabolism; CTP biosynthesis via salvage pathway; CTP from cytidine: step 1/3. It participates in pyrimidine metabolism; UMP biosynthesis via salvage pathway; UMP from uridine: step 1/1. In terms of biological role, catalyzes the conversion of uridine into UMP and cytidine into CMP in the pyrimidine salvage pathway. The sequence is that of Uridine kinase (URK1) from Saccharomyces cerevisiae (strain ATCC 204508 / S288c) (Baker's yeast).